The chain runs to 263 residues: Trans-aconitate 2-methyltransferase (263 aa).

The protein belongs to the methyltransferase superfamily. Tam family.

The protein localises to the cytoplasm. The enzyme catalyses trans-aconitate + S-adenosyl-L-methionine = (E)-3-(methoxycarbonyl)pent-2-enedioate + S-adenosyl-L-homocysteine. Catalyzes the S-adenosylmethionine monomethyl esterification of trans-aconitate. This chain is Trans-aconitate 2-methyltransferase, found in Mycobacterium ulcerans (strain Agy99).